Consider the following 269-residue polypeptide: Tryptophan synthase alpha chain (269 aa).

Residues Glu-49 and Asp-60 each act as proton acceptor in the active site.

Belongs to the TrpA family. As to quaternary structure, tetramer of two alpha and two beta chains.

It catalyses the reaction (1S,2R)-1-C-(indol-3-yl)glycerol 3-phosphate + L-serine = D-glyceraldehyde 3-phosphate + L-tryptophan + H2O. Its pathway is amino-acid biosynthesis; L-tryptophan biosynthesis; L-tryptophan from chorismate: step 5/5. The alpha subunit is responsible for the aldol cleavage of indoleglycerol phosphate to indole and glyceraldehyde 3-phosphate. The polypeptide is Tryptophan synthase alpha chain (Pseudomonas putida (Arthrobacter siderocapsulatus)).